The chain runs to 146 residues: ATP synthase epsilon chain (146 aa).

Residues Gln-102–Arg-122 are disordered.

The protein belongs to the ATPase epsilon chain family. F-type ATPases have 2 components, CF(1) - the catalytic core - and CF(0) - the membrane proton channel. CF(1) has five subunits: alpha(3), beta(3), gamma(1), delta(1), epsilon(1). CF(0) has three main subunits: a, b and c.

It is found in the cell membrane. Functionally, produces ATP from ADP in the presence of a proton gradient across the membrane. In Lactobacillus gasseri (strain ATCC 33323 / DSM 20243 / BCRC 14619 / CIP 102991 / JCM 1131 / KCTC 3163 / NCIMB 11718 / NCTC 13722 / AM63), this protein is ATP synthase epsilon chain.